We begin with the raw amino-acid sequence, 525 residues long: Protein-serine O-palmitoleoyltransferase porcupine (525 aa).

A run of 9 helical transmembrane segments spans residues 83–103 (VMQYVAPMLLLCLLCRLLCLL), 125–145 (LIILQITVGYRLLLLLLLAAV), 159–179 (GAQVLAVLTVGSQFLYELLIW), 220–240 (FAYLGYIYSPATCALGPWVSF), 260–280 (LLPNVVICVLAVTVSNCVAPA), 301–318 (VRSSHYFVGMMAQALLVA), 395–415 (SLLHGMDLRIYLVLISLAFLA), 467–487 (NLAFTALAIFHLAYLGVVLLG), and 505–525 (QAGYLSHYIGLGTFVLYLFIS). The active site involves His-398.

Belongs to the membrane-bound acyltransferase family. Porcupine subfamily. In terms of assembly, interacts with wg and Wnt5.

The protein localises to the endoplasmic reticulum membrane. It catalyses the reaction [Wnt protein]-L-serine + (9Z)-hexadecenoyl-CoA = [Wnt protein]-O-(9Z)-hexadecenoyl-L-serine + CoA. Functionally, protein-serine O-palmitoleoyltransferase that acts as a key regulator of the Wnt signaling pathway by mediating the attachment of palmitoleate, a 16-carbon monounsaturated fatty acid (C16:1(9Z)), to Wnt proteins. Serine palmitoleoylation of Wnt proteins is required for efficient binding to frizzled receptors. Also facilitates the glycosylation of Wnt family members, including wg and Wnt5. The cotranslational disulfide bond formation of wg competes with the N-glycosylation. Porc stimulates the post-translational N-glycosylation by anchoring wg at the ER membrane, probably through acylation. The sequence is that of Protein-serine O-palmitoleoyltransferase porcupine from Drosophila melanogaster (Fruit fly).